The primary structure comprises 51 residues: Large ribosomal subunit protein eL39 (51 aa).

Belongs to the eukaryotic ribosomal protein eL39 family. In terms of assembly, interacts with YIH1.

This is Large ribosomal subunit protein eL39 (RPL39) from Kluyveromyces marxianus (Yeast).